Reading from the N-terminus, the 370-residue chain is UDP-N-acetylglucosamine--N-acetylmuramyl-(pentapeptide) pyrophosphoryl-undecaprenol N-acetylglucosamine transferase (370 aa).

Residues 20-22 (TAG), asparagine 134, arginine 170, serine 204, isoleucine 257, and glutamine 301 each bind UDP-N-acetyl-alpha-D-glucosamine.

Belongs to the glycosyltransferase 28 family. MurG subfamily.

It localises to the cell membrane. It carries out the reaction di-trans,octa-cis-undecaprenyl diphospho-N-acetyl-alpha-D-muramoyl-L-alanyl-D-glutamyl-meso-2,6-diaminopimeloyl-D-alanyl-D-alanine + UDP-N-acetyl-alpha-D-glucosamine = di-trans,octa-cis-undecaprenyl diphospho-[N-acetyl-alpha-D-glucosaminyl-(1-&gt;4)]-N-acetyl-alpha-D-muramoyl-L-alanyl-D-glutamyl-meso-2,6-diaminopimeloyl-D-alanyl-D-alanine + UDP + H(+). It functions in the pathway cell wall biogenesis; peptidoglycan biosynthesis. Cell wall formation. Catalyzes the transfer of a GlcNAc subunit on undecaprenyl-pyrophosphoryl-MurNAc-pentapeptide (lipid intermediate I) to form undecaprenyl-pyrophosphoryl-MurNAc-(pentapeptide)GlcNAc (lipid intermediate II). The chain is UDP-N-acetylglucosamine--N-acetylmuramyl-(pentapeptide) pyrophosphoryl-undecaprenol N-acetylglucosamine transferase from Corynebacterium jeikeium (strain K411).